The sequence spans 242 residues: NH(3)-dependent NAD(+) synthetase (242 aa).

27 to 34 (GISGGIDS) provides a ligand contact to ATP. Aspartate 33 serves as a coordination point for Mg(2+). Arginine 109 serves as a coordination point for deamido-NAD(+). Threonine 129 is a binding site for ATP. Glutamate 134 is a Mg(2+) binding site. 2 residues coordinate deamido-NAD(+): lysine 142 and aspartate 149. The ATP site is built by lysine 158 and threonine 180. Deamido-NAD(+) is bound at residue 231–232 (HK).

The protein belongs to the NAD synthetase family. As to quaternary structure, homodimer.

It catalyses the reaction deamido-NAD(+) + NH4(+) + ATP = AMP + diphosphate + NAD(+) + H(+). Its pathway is cofactor biosynthesis; NAD(+) biosynthesis; NAD(+) from deamido-NAD(+) (ammonia route): step 1/1. Its function is as follows. Catalyzes the ATP-dependent amidation of deamido-NAD to form NAD. Uses ammonia as a nitrogen source. The polypeptide is NH(3)-dependent NAD(+) synthetase (Thermoplasma volcanium (strain ATCC 51530 / DSM 4299 / JCM 9571 / NBRC 15438 / GSS1)).